We begin with the raw amino-acid sequence, 1304 residues long: TPR-containing protein DDB_G0280363 (1304 aa).

6 disordered regions span residues 19–85 (QQHH…HPQQ), 153–195 (NINN…NSSL), 296–334 (LPSTNSSIVSRQQQLQQQQQKLKLKSSPSPISPFFYTQQ), 447–477 (GFNWSPSLQPDQSTSTNHTQAMLQQQQQRQQ), 576–687 (QNQQ…VTTI), and 706–728 (LTTVNHSKPPPNESKRGELVESP). Low complexity-rich tracts occupy residues 25–44 (QQNNTQVQQQQQQHTTQFNQ), 52–85 (HQQHQQQQHHQQQHHQQQQQQQQQQQQQQQHPQQ), and 153–194 (NINN…NNSS). The span at 296–306 (LPSTNSSIVSR) shows a compositional bias: polar residues. Residues 307–316 (QQQLQQQQQK) are compositionally biased toward low complexity. Polar residues predominate over residues 448–465 (FNWSPSLQPDQSTSTNHT). Composition is skewed to low complexity over residues 466-477 (QAMLQQQQQRQQ) and 576-597 (QNQQQNQQQNQQQNQQHYPNQH). The segment covering 598–625 (HGQHQHNQHNQHHNQHHNQSHPNHKNQH) has biased composition (basic residues). The span at 626–687 (QKQNQTQQST…NNNTNNVTTI (62 aa)) shows a compositional bias: low complexity. TPR repeat units lie at residues 769-802 (WRVYLELADLANRQNNLKLARKFYRKVTSTQPYI), 899-932 (MKHVPWYGPIYQEAYKLEERCEEYERAINIVEKG), 978-1011 (WKIYFEAAQIEERSKNLTLSRAAYVKSVELCPEN), 1046-1079 (SKLRSLVLLEYSRLEEYAGNINKSRRILKMAHVE), 1084-1111 (WKVFLESVLLEMRANNYEAAIKEAKESL), 1112-1150 (KIHSGAGRLWAALIQLNQLKGVKSQLNVFKKALQFVPKS), and 1152-1184 (EVWCEGARIALNNNELREARRFLEFAIQFTPQF).

This chain is TPR-containing protein DDB_G0280363, found in Dictyostelium discoideum (Social amoeba).